Reading from the N-terminus, the 129-residue chain is Small ribosomal subunit protein uS8my (129 aa).

The protein belongs to the universal ribosomal protein uS8 family. As to quaternary structure, component of the mitochondrial ribosome small subunit.

Its subcellular location is the mitochondrion. This is Small ribosomal subunit protein uS8my (RPS15AE) from Arabidopsis thaliana (Mouse-ear cress).